A 487-amino-acid chain; its full sequence is Histamine H1 receptor (487 aa).

The Extracellular portion of the chain corresponds to 1–29 (MSLPNSSCLLEDKMCEGNKTTMASPQLMP). Residues asparagine 5 and asparagine 18 are each glycosylated (N-linked (GlcNAc...) asparagine). The helical transmembrane segment at 30-50 (LVVVLSTICLVTVGLNLLVLY) threads the bilayer. At 51–64 (AVRSERKLHTVGNL) the chain is on the cytoplasmic side. A helical transmembrane segment spans residues 65–89 (YIVSLSVADLIVGAVVMPMNILYLL). At 90-97 (MSKWSLGR) the chain is on the extracellular side. The helical transmembrane segment at 98-123 (PLCLFWLSMDYVASTASIFSVFILCI) threads the bilayer. Cysteines 100 and 180 form a disulfide. Positions 107 and 112 each coordinate histamine. The tract at residues 107 to 112 (DYVAST) is important for agonist binding. At 124–144 (DRYRSVQQPLRYLKYRTKTRA) the chain is on the cytoplasmic side. Residues threonine 140 and threonine 142 each carry the phosphothreonine modification. A helical membrane pass occupies residues 145 to 164 (SATILGAWFLSFLWVIPILG). At 165 to 188 (WNHFMQQTSVRREDKCETDFYDVT) the chain is on the extracellular side. Residues 189–211 (WFKVMTAIINFYLPTLLMLWFYA) form a helical membrane-spanning segment. Position 198 (asparagine 198) interacts with histamine. Residues 212–416 (KIYKAVRQHC…MNRERKAAKQ (205 aa)) lie on the Cytoplasmic side of the membrane. At serine 230 the chain carries Phosphoserine. Basic and acidic residues predominate over residues 238 to 261 (KLRPENPKGDAKKPGKESPWEVLK). Positions 238–292 (KLRPENPKGDAKKPGKESPWEVLKRKPKDAGGGSVLKSPSQTXKEMKSPVVFSQE) are disordered. Threonine 279 is modified (phosphothreonine). 2 positions are modified to phosphoserine: serine 344 and serine 347. Positions 345–379 (EISEDQMLGDSQSFSRTDSDTTTETAPGKGKLRSG) are disordered. The segment covering 353–369 (GDSQSFSRTDSDTTTET) has biased composition (polar residues). 3 positions are modified to phosphoserine: serine 380, serine 396, and serine 398. The chain crosses the membrane as a helical span at residues 417–440 (LGFIMAAFILCWIPYFIFFMVIAF). Residues 424–428 (FILCW) are important for agonist binding. Tyrosine 431 is a binding site for histamine. Cysteine 441 and cysteine 444 are disulfide-bonded. Residues 441–446 (CKNCCN) lie on the Extracellular side of the membrane. The chain crosses the membrane as a helical span at residues 447-469 (EHLHMFTIWLGYINSTLNPLIYP). Topologically, residues 470 to 487 (LCNENFKKTFKRILHIRS) are cytoplasmic.

Belongs to the G-protein coupled receptor 1 family. Phosphorylation at sites in the second and third cytoplasmic loops independently contribute to agonist-induced receptor down-regulation.

The protein resides in the cell membrane. Its function is as follows. G-protein-coupled receptor for histamine, a biogenic amine that functions as an immune modulator and a neurotransmitter. Through the H1 receptor, histamine mediates the contraction of smooth muscles and increases capillary permeability due to contraction of terminal venules. Also mediates neurotransmission in the central nervous system and thereby regulates circadian rhythms, emotional and locomotor activities as well as cognitive functions. The chain is Histamine H1 receptor from Pan troglodytes (Chimpanzee).